We begin with the raw amino-acid sequence, 563 residues long: RUN and FYVE domain-containing protein 4 (563 aa).

The RUN domain maps to Thr33–Pro166. Disordered regions lie at residues Ser176–Gly327 and Lys375–Asp397. 2 stretches are compositionally biased toward basic and acidic residues: residues Gly196–Arg205 and Glu263–Leu284. A compositionally biased stretch (polar residues) spans Glu285–Arg295. Over residues Arg297–Gly312 the composition is skewed to basic and acidic residues. Residues Glu385–Glu396 are compositionally biased toward polar residues. Residues Gln421–Glu462 are a coiled coil. An FYVE-type zinc finger spans residues Leu428–Glu558. The Zn(2+) site is built by Cys513, Cys516, Cys529, Cys532, Cys537, Cys540, Cys551, and Cys554.

In terms of assembly, forms homodimers (via coiled coil domain). Forms a ternary complex with RAB7A and LAMP2; the interaction with RAB7A is mediated by RUFY4 (via RUN and coiled coil domains). Interacts with GTP-, but not GDP-bound ARL8A and ARL8B. Interacts with dynactin/DCTN1 and the dynein intermediate chain DYNC1I1/2. Expressed in dendritic cells.

The protein localises to the cytoplasmic vesicle. It localises to the autophagosome. It is found in the lysosome. Its function is as follows. ARL8 effector that promotes the coupling of endolysosomes to dynein-dynactin for retrograde transport along microtubules. Acts by binding both GTP-bound ARL8 and dynein-dynactin. In nonneuronal cells, promotes concentration of endolysosomes in the juxtanuclear area. In hippocampal neurons, drives retrograde transport of endolysosomes from the axon to the soma. Positive regulator of macroautophagy in dendritic cells. Increases autophagic flux, probably by stimulating both autophagosome formation and facilitating tethering with lysosomes. Binds to phosphatidylinositol 3-phosphate (PtdIns3P) through its FYVE-type zinc finger. Positive regulator of osteosclast bone-resorbing activity, possibly by promoting late endosome-lysosome fusion by acting as an adapter protein between RAB7A on late endosomes and LAMP2 on primary lysosomes. In Mus musculus (Mouse), this protein is RUN and FYVE domain-containing protein 4 (Rufy4).